A 299-amino-acid polypeptide reads, in one-letter code: uncharacterized protein (299 aa).

This is an uncharacterized protein from Mycobacterium tuberculosis (strain CDC 1551 / Oshkosh).